Consider the following 521-residue polypeptide: Solute carrier family 35 member F4 (521 aa).

Helical transmembrane passes span 160–180 (MVLK…SWVG), 192–212 (FYCP…FFPV), 248–266 (FLKR…NYLY), 277–297 (DVSA…WIVL), 301–321 (FMGV…MMAY), 330–350 (IIGV…KVLF), 365–385 (FVST…VILY), 395–417 (FAAL…NILV), 419–441 (VGVV…PGNA), and 450–470 (VIFN…FLLM). In terms of domain architecture, EamA spans 261–321 (LTNYLYLLAL…AITGIVMMAY (61 aa)).

This sequence belongs to the SLC35F solute transporter family.

The protein resides in the membrane. Putative solute transporter. This Homo sapiens (Human) protein is Solute carrier family 35 member F4 (SLC35F4).